Here is a 502-residue protein sequence, read N- to C-terminus: ATP synthase subunit alpha (502 aa).

Position 169–176 (169–176 (GDRQTGKT)) interacts with ATP.

This sequence belongs to the ATPase alpha/beta chains family. In terms of assembly, F-type ATPases have 2 components, CF(1) - the catalytic core - and CF(0) - the membrane proton channel. CF(1) has five subunits: alpha(3), beta(3), gamma(1), delta(1), epsilon(1). CF(0) has three main subunits: a(1), b(2) and c(9-12). The alpha and beta chains form an alternating ring which encloses part of the gamma chain. CF(1) is attached to CF(0) by a central stalk formed by the gamma and epsilon chains, while a peripheral stalk is formed by the delta and b chains.

The protein resides in the cell membrane. It catalyses the reaction ATP + H2O + 4 H(+)(in) = ADP + phosphate + 5 H(+)(out). In terms of biological role, produces ATP from ADP in the presence of a proton gradient across the membrane. The alpha chain is a regulatory subunit. The polypeptide is ATP synthase subunit alpha (Staphylococcus aureus (strain bovine RF122 / ET3-1)).